We begin with the raw amino-acid sequence, 116 residues long: Ribonuclease P protein component (116 aa).

Belongs to the RnpA family. In terms of assembly, consists of a catalytic RNA component (M1 or rnpB) and a protein subunit.

It carries out the reaction Endonucleolytic cleavage of RNA, removing 5'-extranucleotides from tRNA precursor.. In terms of biological role, RNaseP catalyzes the removal of the 5'-leader sequence from pre-tRNA to produce the mature 5'-terminus. It can also cleave other RNA substrates such as 4.5S RNA. The protein component plays an auxiliary but essential role in vivo by binding to the 5'-leader sequence and broadening the substrate specificity of the ribozyme. The sequence is that of Ribonuclease P protein component from Gluconacetobacter diazotrophicus (strain ATCC 49037 / DSM 5601 / CCUG 37298 / CIP 103539 / LMG 7603 / PAl5).